We begin with the raw amino-acid sequence, 462 residues long: Argininosuccinate lyase (462 aa).

It belongs to the lyase 1 family. Argininosuccinate lyase subfamily.

Its subcellular location is the cytoplasm. It catalyses the reaction 2-(N(omega)-L-arginino)succinate = fumarate + L-arginine. Its pathway is amino-acid biosynthesis; L-arginine biosynthesis; L-arginine from L-ornithine and carbamoyl phosphate: step 3/3. This is Argininosuccinate lyase from Prochlorococcus marinus (strain MIT 9211).